The primary structure comprises 159 residues: Phosphopantetheine adenylyltransferase (159 aa).

Thr-9 contacts substrate. Residues 9-10 (TF) and His-17 contribute to the ATP site. 3 residues coordinate substrate: Lys-41, Leu-73, and Arg-87. ATP contacts are provided by residues 88–90 (GLR), Glu-98, and 123–129 (YSYISST).

The protein belongs to the bacterial CoaD family. As to quaternary structure, homohexamer. Requires Mg(2+) as cofactor.

It is found in the cytoplasm. It catalyses the reaction (R)-4'-phosphopantetheine + ATP + H(+) = 3'-dephospho-CoA + diphosphate. It participates in cofactor biosynthesis; coenzyme A biosynthesis; CoA from (R)-pantothenate: step 4/5. Functionally, reversibly transfers an adenylyl group from ATP to 4'-phosphopantetheine, yielding dephospho-CoA (dPCoA) and pyrophosphate. The chain is Phosphopantetheine adenylyltransferase from Azotobacter vinelandii (strain DJ / ATCC BAA-1303).